The following is a 277-amino-acid chain: Thymidylate synthase (277 aa).

R27 is a dUMP binding site. Position 57 (H57) interacts with (6R)-5,10-methylene-5,6,7,8-tetrahydrofolate. Residue 132–133 (RR) coordinates dUMP. The active-site Nucleophile is the C152. Residues 179–182 (RSAD), N190, and 220–222 (HIY) contribute to the dUMP site. D182 provides a ligand contact to (6R)-5,10-methylene-5,6,7,8-tetrahydrofolate. Residue A276 coordinates (6R)-5,10-methylene-5,6,7,8-tetrahydrofolate.

It belongs to the thymidylate synthase family. Bacterial-type ThyA subfamily. As to quaternary structure, homodimer.

The protein resides in the cytoplasm. It carries out the reaction dUMP + (6R)-5,10-methylene-5,6,7,8-tetrahydrofolate = 7,8-dihydrofolate + dTMP. It functions in the pathway pyrimidine metabolism; dTTP biosynthesis. Catalyzes the reductive methylation of 2'-deoxyuridine-5'-monophosphate (dUMP) to 2'-deoxythymidine-5'-monophosphate (dTMP) while utilizing 5,10-methylenetetrahydrofolate (mTHF) as the methyl donor and reductant in the reaction, yielding dihydrofolate (DHF) as a by-product. This enzymatic reaction provides an intracellular de novo source of dTMP, an essential precursor for DNA biosynthesis. This is Thymidylate synthase from Acidovorax sp. (strain JS42).